We begin with the raw amino-acid sequence, 118 residues long: Large ribosomal subunit protein bL19 (118 aa).

It belongs to the bacterial ribosomal protein bL19 family.

This protein is located at the 30S-50S ribosomal subunit interface and may play a role in the structure and function of the aminoacyl-tRNA binding site. The sequence is that of Large ribosomal subunit protein bL19 from Helicobacter pylori (strain G27).